The chain runs to 90 residues: Small ribosomal subunit protein uS15c (90 aa).

As to quaternary structure, component of the chloroplast small ribosomal subunit (SSU). Mature 70S chloroplast ribosomes of higher plants consist of a small (30S) and a large (50S) subunit. The 30S small subunit contains 1 molecule of ribosomal RNA (16S rRNA) and 24 different proteins. The 50S large subunit contains 3 rRNA molecules (23S, 5S and 4.5S rRNA) and 33 different proteins.

The protein localises to the plastid. Its subcellular location is the chloroplast. Its function is as follows. Component of the chloroplast ribosome (chloro-ribosome), a dedicated translation machinery responsible for the synthesis of chloroplast genome-encoded proteins, including proteins of the transcription and translation machinery and components of the photosynthetic apparatus. The protein is Small ribosomal subunit protein uS15c (rps15) of Spinacia oleracea (Spinach).